Consider the following 440-residue polypeptide: NADH-quinone oxidoreductase subunit D 1 (440 aa).

The protein belongs to the complex I 49 kDa subunit family. NDH-1 is composed of 14 different subunits. Subunits NuoB, C, D, E, F, and G constitute the peripheral sector of the complex.

It is found in the cell inner membrane. The enzyme catalyses a quinone + NADH + 5 H(+)(in) = a quinol + NAD(+) + 4 H(+)(out). Its function is as follows. NDH-1 shuttles electrons from NADH, via FMN and iron-sulfur (Fe-S) centers, to quinones in the respiratory chain. The immediate electron acceptor for the enzyme in this species is believed to be a menaquinone. Couples the redox reaction to proton translocation (for every two electrons transferred, four hydrogen ions are translocated across the cytoplasmic membrane), and thus conserves the redox energy in a proton gradient. The polypeptide is NADH-quinone oxidoreductase subunit D 1 (Chloroherpeton thalassium (strain ATCC 35110 / GB-78)).